We begin with the raw amino-acid sequence, 563 residues long: Quinidine resistance protein 1 (563 aa).

Positions 1–10 are enriched in polar residues; it reads MTKQQTSVMR. The segment at 1–50 is disordered; the sequence is MTKQQTSVMRNASIAKEEREGSDNNNVDRSSSDAISDNDAERSNSHSEID. Topologically, residues 1–75 are cytoplasmic; that stretch reads MTKQQTSVMR…KQKMLLVVQC (75 aa). A compositionally biased stretch (low complexity) spans 23–33; it reads DNNNVDRSSSD. Over residues 39 to 49 the composition is skewed to basic and acidic residues; it reads DAERSNSHSEI. A helical transmembrane segment spans residues 76-96; it reads AFTGFFSTVAGSIYYPVLTII. The Extracellular segment spans residues 97–108; it reads ERKFNITEELAN. A helical membrane pass occupies residues 109–129; it reads VTIVVYFIFQGVAPSIMGGLA. Residues 130–135 are Cytoplasmic-facing; sequence DTFGRR. The chain crosses the membrane as a helical span at residues 136–156; the sequence is PIVLWAILAYFCACIGLACAH. The Extracellular segment spans residues 157-165; sequence NYAQILALR. A helical membrane pass occupies residues 166–186; it reads CLQAAGISPVIAINSGIMGDV. The Cytoplasmic segment spans residues 187-195; that stretch reads TTKVERGGY. The helical transmembrane segment at 196–216 threads the bilayer; that stretch reads VGLVAGFQVVGTAFGALIGAG. At 217 to 224 the chain is on the extracellular side; it reads LSSKWGWR. The chain crosses the membrane as a helical span at residues 225-245; it reads AIFWFLAIGSGICLVFSTLLM. The Cytoplasmic segment spans residues 246 to 296; the sequence is PETKRTLVGNGSVTPRSFLNRSLILHVGSVKKTLHLDDPDPETLEPRTSVD. The helical transmembrane segment at 297–317 threads the bilayer; sequence FLAPLKILHIREIDILLSIAG. Over 318 to 341 the chain is Extracellular; that stretch reads LQFSTWTTHQTALTIVLSKKYNLS. The helical transmembrane segment at 342 to 362 threads the bilayer; that stretch reads VAKIGLCFLPAGISTLTSIIS. At 363–421 the chain is on the cytoplasmic side; sequence AGRYLNWSYRTRKVKYNRWIKEQELQLMEKYKGDKNKVAELIHSNSHYAFNLVEARLHP. Residues 422–442 traverse the membrane as a helical segment; sequence AFVTLLLSSIGFTAFGWCISV. Residues 443–445 lie on the Extracellular side of the membrane; that stretch reads KTP. The chain crosses the membrane as a helical span at residues 446-466; it reads LAAVLCTSAFASLFSNCILTF. The Cytoplasmic segment spans residues 467–481; it reads STTLIVDLFPSKAST. Residues 482 to 502 traverse the membrane as a helical segment; it reads ATGCLNLFRCLLSAIFIAALT. At 503–511 the chain is on the extracellular side; sequence KMVEKMRYG. The chain crosses the membrane as a helical span at residues 512–532; sequence GVFTFLSAITSSSSLLLFYLL. Over 533-563 the chain is Cytoplasmic; the sequence is KNGKQLSFDRIRANDKSAGRSVGKNSEKVST.

It belongs to the major facilitator superfamily. CAR1 family.

The protein resides in the cell membrane. Its function is as follows. Multidrug resistance transporter involved in resistance and adaptation to quinidine and ketoconazole. This chain is Quinidine resistance protein 1 (QDR1), found in Saccharomyces cerevisiae (strain ATCC 204508 / S288c) (Baker's yeast).